Here is a 179-residue protein sequence, read N- to C-terminus: Monothiol glutaredoxin-S12, chloroplastic (179 aa).

Residues methionine 1 to lysine 61 constitute a chloroplast transit peptide. Residue alanine 62 is modified to N-acetylalanine. In terms of domain architecture, Glutaredoxin spans glutamate 75–asparagine 176. Cysteine 95 is a binding site for [2Fe-2S] cluster.

This sequence belongs to the glutaredoxin family. CPYC subfamily.

The protein resides in the plastid. The protein localises to the chloroplast. Its function is as follows. May only reduce GSH-thiol disulfides, but not protein disulfides. The polypeptide is Monothiol glutaredoxin-S12, chloroplastic (GRXS12) (Arabidopsis thaliana (Mouse-ear cress)).